The sequence spans 82 residues: RNA-binding protein BPUM_0095 (82 aa).

It belongs to the eukaryotic ribosomal protein eL8 family.

The protein is RNA-binding protein BPUM_0095 of Bacillus pumilus (strain SAFR-032).